A 615-amino-acid chain; its full sequence is DNA mismatch repair protein MutL (615 aa).

The segment at 363-397 (FAEPAVREPVAPRYTPAPASGSRPAAPWPNAQPGY) is disordered. Positions 378-391 (PAPASGSRPAAPWP) are enriched in low complexity.

The protein belongs to the DNA mismatch repair MutL/HexB family.

This protein is involved in the repair of mismatches in DNA. It is required for dam-dependent methyl-directed DNA mismatch repair. May act as a 'molecular matchmaker', a protein that promotes the formation of a stable complex between two or more DNA-binding proteins in an ATP-dependent manner without itself being part of a final effector complex. The chain is DNA mismatch repair protein MutL from Escherichia coli O157:H7 (strain EC4115 / EHEC).